The following is a 676-amino-acid chain: DNA-directed RNA polymerase subunit beta' (676 aa).

Positions 69, 71, 87, and 90 each coordinate Zn(2+). Residues Asp-489, Asp-491, and Asp-493 each coordinate Mg(2+).

This sequence belongs to the RNA polymerase beta' chain family. RpoC1 subfamily. In terms of assembly, in plastids the minimal PEP RNA polymerase catalytic core is composed of four subunits: alpha, beta, beta', and beta''. When a (nuclear-encoded) sigma factor is associated with the core the holoenzyme is formed, which can initiate transcription. It depends on Mg(2+) as a cofactor. The cofactor is Zn(2+).

It localises to the plastid. The protein localises to the chloroplast. It carries out the reaction RNA(n) + a ribonucleoside 5'-triphosphate = RNA(n+1) + diphosphate. In terms of biological role, DNA-dependent RNA polymerase catalyzes the transcription of DNA into RNA using the four ribonucleoside triphosphates as substrates. The chain is DNA-directed RNA polymerase subunit beta' from Lolium perenne (Perennial ryegrass).